Consider the following 319-residue polypeptide: Protein HEXIM1 (319 aa).

A compositionally biased stretch (basic and acidic residues) spans 1–22 (MELIKEETAPEDDSRGRQRDCR). 4 disordered regions span residues 1–111 (MELI…KKRR), 157–223 (LMEE…LQKD), 262–286 (NNWL…RVRE), and 299–319 (NELL…SQPS). Polar residues predominate over residues 24 to 35 (SVVSSKQVQRNQ). Basic and acidic residues predominate over residues 49–61 (PMCRDRSDPEPRT). Over residues 97–111 (GKKKHRRRPSKKKRR) the composition is skewed to basic residues. Residues 185 to 202 (TASEDENFEAEEDDEEEG) show a composition bias toward acidic residues. A compositionally biased stretch (gly residues) spans 203-216 (GGGSDGMGRPGQAG). Residues 240-306 (SKQELVREYL…ENNELLLKTP (67 aa)) adopt a coiled-coil conformation. The span at 306-319 (PASNEPGLNQSQPS) shows a compositional bias: polar residues.

It belongs to the HEXIM family. As to quaternary structure, homooligomer and heterooligomer. Core component of the 7SK RNP complex.

The protein localises to the nucleus. The protein resides in the cytoplasm. In terms of biological role, transcriptional regulator which functions as a general RNA polymerase II transcription inhibitor. Core component of the 7SK RNP complex: in cooperation with 7SK snRNA sequesters P-TEFb in a large inactive 7SK snRNP complex preventing RNA polymerase II phosphorylation and subsequent transcriptional elongation. Plays a role in the regulation of DNA virus-mediated innate immune response by assembling into the HDP-RNP complex, a complex that serves as a platform for IRF3 phosphorylation and subsequent innate immune response activation through the cGAS-STING pathway. In Danio rerio (Zebrafish), this protein is Protein HEXIM1 (hexim1).